The following is a 569-amino-acid chain: Proline--tRNA ligase (569 aa).

The protein belongs to the class-II aminoacyl-tRNA synthetase family. ProS type 1 subfamily. In terms of assembly, homodimer.

The protein localises to the cytoplasm. It carries out the reaction tRNA(Pro) + L-proline + ATP = L-prolyl-tRNA(Pro) + AMP + diphosphate. Functionally, catalyzes the attachment of proline to tRNA(Pro) in a two-step reaction: proline is first activated by ATP to form Pro-AMP and then transferred to the acceptor end of tRNA(Pro). As ProRS can inadvertently accommodate and process non-cognate amino acids such as alanine and cysteine, to avoid such errors it has two additional distinct editing activities against alanine. One activity is designated as 'pretransfer' editing and involves the tRNA(Pro)-independent hydrolysis of activated Ala-AMP. The other activity is designated 'posttransfer' editing and involves deacylation of mischarged Ala-tRNA(Pro). The misacylated Cys-tRNA(Pro) is not edited by ProRS. The polypeptide is Proline--tRNA ligase (Campylobacter jejuni subsp. jejuni serotype O:23/36 (strain 81-176)).